The primary structure comprises 151 residues: D-aminoacyl-tRNA deacylase (151 aa).

The Gly-cisPro motif, important for rejection of L-amino acids signature appears at 136 to 137; it reads GP.

It belongs to the DTD family. Homodimer.

The protein localises to the cytoplasm. The enzyme catalyses glycyl-tRNA(Ala) + H2O = tRNA(Ala) + glycine + H(+). It catalyses the reaction a D-aminoacyl-tRNA + H2O = a tRNA + a D-alpha-amino acid + H(+). Its function is as follows. An aminoacyl-tRNA editing enzyme that deacylates mischarged D-aminoacyl-tRNAs. Also deacylates mischarged glycyl-tRNA(Ala), protecting cells against glycine mischarging by AlaRS. Acts via tRNA-based rather than protein-based catalysis; rejects L-amino acids rather than detecting D-amino acids in the active site. By recycling D-aminoacyl-tRNA to D-amino acids and free tRNA molecules, this enzyme counteracts the toxicity associated with the formation of D-aminoacyl-tRNA entities in vivo and helps enforce protein L-homochirality. The polypeptide is D-aminoacyl-tRNA deacylase (Streptococcus gordonii (strain Challis / ATCC 35105 / BCRC 15272 / CH1 / DL1 / V288)).